The chain runs to 165 residues: Lithostathine-1 (165 aa).

An N-terminal signal peptide occupies residues 1 to 21 (MARNAYFILLSCLIVLSPSQG). Residue Gln-22 is modified to Pyrrolidone carboxylic acid. In terms of domain architecture, C-type lectin spans 33–163 (ISCPEGSNAY…DAQYSFVCKF (131 aa)). 3 cysteine pairs are disulfide-bonded: Cys-35–Cys-46, Cys-63–Cys-161, and Cys-136–Cys-153. An N-linked (GlcNAc...) asparagine glycan is attached at Asn-129.

Expressed only in regenerating islets and normal exocrine pancreas, but not in normal pancreatic islets. Expressed strongly in pancreas, moderately in gall bladder, and weakly in liver.

It is found in the secreted. Functionally, might act as an inhibitor of spontaneous calcium carbonate precipitation. The protein is Lithostathine-1 (Reg1) of Mus musculus (Mouse).